Here is a 943-residue protein sequence, read N- to C-terminus: Isoleucine--tRNA ligase (943 aa).

A 'HIGH' region motif is present at residues 59–69; sequence PYANGRIHLGH. Glutamate 577 provides a ligand contact to L-isoleucyl-5'-AMP. The 'KMSKS' region motif lies at 618–622; it reads KMSKS. Lysine 621 lines the ATP pocket. Zn(2+) contacts are provided by cysteine 906, cysteine 909, cysteine 926, and cysteine 929.

The protein belongs to the class-I aminoacyl-tRNA synthetase family. IleS type 1 subfamily. In terms of assembly, monomer. Requires Zn(2+) as cofactor.

It is found in the cytoplasm. The enzyme catalyses tRNA(Ile) + L-isoleucine + ATP = L-isoleucyl-tRNA(Ile) + AMP + diphosphate. In terms of biological role, catalyzes the attachment of isoleucine to tRNA(Ile). As IleRS can inadvertently accommodate and process structurally similar amino acids such as valine, to avoid such errors it has two additional distinct tRNA(Ile)-dependent editing activities. One activity is designated as 'pretransfer' editing and involves the hydrolysis of activated Val-AMP. The other activity is designated 'posttransfer' editing and involves deacylation of mischarged Val-tRNA(Ile). The sequence is that of Isoleucine--tRNA ligase from Stenotrophomonas maltophilia (strain R551-3).